Consider the following 643-residue polypeptide: Probable potassium transport system protein Kup (643 aa).

The span at Met1 to Ile12 shows a compositional bias: basic and acidic residues. The disordered stretch occupies residues Met1–His20. Transmembrane regions (helical) follow at residues Leu28 to Leu48, Ala65 to Leu85, Trp121 to Thr141, Pro158 to Phe178, Gly187 to Ile207, Gly224 to Leu244, Trp268 to Leu288, Leu301 to Ala321, Ile358 to Phe378, Leu384 to Tyr404, Pro415 to Ala435, and Leu440 to Thr460.

Belongs to the HAK/KUP transporter (TC 2.A.72) family.

It localises to the cell inner membrane. It catalyses the reaction K(+)(in) + H(+)(in) = K(+)(out) + H(+)(out). Functionally, transport of potassium into the cell. Likely operates as a K(+):H(+) symporter. The polypeptide is Probable potassium transport system protein Kup (Chlorobium luteolum (strain DSM 273 / BCRC 81028 / 2530) (Pelodictyon luteolum)).